Here is a 419-residue protein sequence, read N- to C-terminus: D-amino acid dehydrogenase (419 aa).

3–17 (VIVLGSGVIGVASAY) provides a ligand contact to FAD.

This sequence belongs to the DadA oxidoreductase family. FAD serves as cofactor.

The catalysed reaction is a D-alpha-amino acid + A + H2O = a 2-oxocarboxylate + AH2 + NH4(+). It participates in amino-acid degradation; D-alanine degradation; NH(3) and pyruvate from D-alanine: step 1/1. In terms of biological role, oxidative deamination of D-amino acids. This Acinetobacter baylyi (strain ATCC 33305 / BD413 / ADP1) protein is D-amino acid dehydrogenase.